Reading from the N-terminus, the 518-residue chain is Protein translocase subunit SecD (518 aa).

Transmembrane regions (helical) follow at residues 9-29 (IVLS…NFIQ), 356-376 (GKKA…LSYG), 377-397 (VIGL…LALL), 406-426 (LPGI…NVLI), 463-483 (LIVA…FAVA), and 486-506 (IGII…IDVW).

The protein belongs to the SecD/SecF family. SecD subfamily. Forms a complex with SecF. Part of the essential Sec protein translocation apparatus which comprises SecA, SecYEG and auxiliary proteins SecDF-YajC and YidC.

The protein resides in the cell inner membrane. In terms of biological role, part of the Sec protein translocase complex. Interacts with the SecYEG preprotein conducting channel. SecDF uses the proton motive force (PMF) to complete protein translocation after the ATP-dependent function of SecA. The sequence is that of Protein translocase subunit SecD from Rickettsia prowazekii (strain Madrid E).